The sequence spans 459 residues: tRNA modification GTPase MnmE (459 aa).

The (6S)-5-formyl-5,6,7,8-tetrahydrofolate site is built by R22, E85, and R124. Residues 221 to 380 (GLSTVIVGKP…LELQIRDLFF (160 aa)) enclose the TrmE-type G domain. N231 lines the K(+) pocket. Residues 231 to 236 (NVGKSS), 250 to 256 (TEVAGTT), and 275 to 278 (DTAG) contribute to the GTP site. A Mg(2+)-binding site is contributed by S235. K(+) contacts are provided by T250, V252, and T255. Residue T256 coordinates Mg(2+). K459 provides a ligand contact to (6S)-5-formyl-5,6,7,8-tetrahydrofolate.

It belongs to the TRAFAC class TrmE-Era-EngA-EngB-Septin-like GTPase superfamily. TrmE GTPase family. In terms of assembly, homodimer. Heterotetramer of two MnmE and two MnmG subunits. Requires K(+) as cofactor.

It is found in the cytoplasm. Exhibits a very high intrinsic GTPase hydrolysis rate. Involved in the addition of a carboxymethylaminomethyl (cmnm) group at the wobble position (U34) of certain tRNAs, forming tRNA-cmnm(5)s(2)U34. The sequence is that of tRNA modification GTPase MnmE from Staphylococcus haemolyticus (strain JCSC1435).